Here is a 593-residue protein sequence, read N- to C-terminus: MENITDGKWGSLPVKLHDNILQTLKELGFTYMTPVQSACIPLFMSNKDVAAEAVTGSGKTLAFVIPALEILLKREEKLKKMQVGALIITPTRELAMQISEVMGRFLQGFPQFTQILLIGGSNPIEDVEKLKTQGANIIIATPGRLEDMFRRKADGLDLATAVKSLDVLVLDEADRLLDMGFEASLNTILGYLPKQRRTGLFSATQTQELEKLVRAGLRNPVRITVKEKGVAASSVQKTPAKLSNYYTMCRAEEKFNTLVAFLRQHKHEKQLVFFSTCACVEYFGKALEVLVKNVSIHCIHGKMKHKRNKIFADFRALKSGILVCTDVMARGIDIPEVNWVLQYDPPSSASSFVHRCGRTARIGNQGNALVFLLPMEESYVNFLSINQKCPLQSFSSVKDVVDVLPKLKAMALGDRAMFEKGMRAFVSYVQAYAKHECSLIFRIKDLDFAALARGFALLRLPKMPELRGKTFPDFKAEAIDTDTIRFKDKNREKQRQKWLAEQKEKEVPLRKNFIKNKAWSKQKIKKDRKKKRLPKAKLDQDSDAAEEDLNELMNDTRLLKKLKKGKITEEDFDKQMSSTDKHKPAGIDSSDGD.

Residues 9 to 37 (WGSLPVKLHDNILQTLKELGFTYMTPVQS) carry the Q motif motif. The Helicase ATP-binding domain occupies 40–223 (IPLFMSNKDV…RAGLRNPVRI (184 aa)). 53 to 60 (AVTGSGKT) is a binding site for ATP. The short motif at 171 to 174 (DEAD) is the DEAD box element. Residues 241–405 (KLSNYYTMCR…SVKDVVDVLP (165 aa)) form the Helicase C-terminal domain. Residues 524-535 (IKKDRKKKRLPK) show a composition bias toward basic residues. Disordered stretches follow at residues 524–545 (IKKDRKKKRLPKAKLDQDSDAA) and 569–593 (EEDFDKQMSSTDKHKPAGIDSSDGD). The important for nuclear localization stretch occupies residues 531–560 (KRLPKAKLDQDSDAAEEDLNELMNDTRLLK). Residues 535-565 (KAKLDQDSDAAEEDLNELMNDTRLLKKLKKG) adopt a coiled-coil conformation.

It belongs to the DEAD box helicase family. DDX55/SPB4 subfamily. Interacts with 28S rRNA. Interacts with double-stranded RNA substrates in vitro; the interaction stimulates ATPase activity.

It is found in the nucleus. The protein localises to the nucleoplasm. The catalysed reaction is ATP + H2O = ADP + phosphate + H(+). Probable ATP-binding RNA helicase. Plays an essential role in early embryonic development. Has ATPase activity and is involved in the maturation of precursor large subunit rRNAs. In Danio rerio (Zebrafish), this protein is ATP-dependent RNA helicase DDX55 (ddx55).